Here is a 628-residue protein sequence, read N- to C-terminus: Zinc finger protein 555 (628 aa).

One can recognise a KRAB domain in the interval 4-77; that stretch reads VVFEDVAVDF…ESKIATFTRN (74 aa). Residues 172 to 194 form a C2H2-type 1; degenerate zinc finger; sequence YQCQECGQAYSCRSHLRMHVRTH. 14 C2H2-type zinc fingers span residues 200-222, 228-250, 256-278, 284-306, 312-334, 340-362, 368-390, 396-418, 424-446, 452-474, 480-502, 508-530, 536-558, and 564-586; these read YVCKLCGKTFPRTSSLNRHVRIH, YECKQCGKAFIDFSSLTSHLRSH, YKCKECGKAFSYSSTFRRHTITH, YKCKECAEAFSYSSTFRRHMISH, HKCKECGEAFSYSSAFRRHMITH, YECKQCGKTFIYLQSFRRHERIH, YECKQCGKTFIYPQSFRRHERTH, YECNQCGKAFSHPSSFRGHMRVH, YECKQCGKTFNWPISLRKHMRTH, YECKQCGKAFSLSACFREHVRMH, YECKLCGKAFYCHISLQKHMRRH, YKCKQCGKAFSWPELLQQHVRTH, YECKECGKVFKWPSSLPIHMRLH, and YQCKHCGKAFNCSSSLRRHVRIH.

It belongs to the krueppel C2H2-type zinc-finger protein family.

It is found in the nucleus. Functionally, may be involved in transcriptional regulation. The protein is Zinc finger protein 555 (ZNF555) of Homo sapiens (Human).